Consider the following 1050-residue polypeptide: MDS1 and EVI1 complex locus protein EVI1-B (1050 aa).

3 consecutive C2H2-type zinc fingers follow at residues 21-48 (YHCEECDQLFESKTELSNHQKYSCGTPH), 75-97 (HECKECDQVFPDMQSLEKHLLSH), and 103-125 (YKCDQCPKAFNWKSNLIRHQMSH). A C2H2-type 4; degenerate zinc finger spans residues 131-155 (YECENCSKQVFTDPSNLQRHIRSQH). 2 C2H2-type zinc fingers span residues 161 to 183 (HACSECGKTFATSSGLKQHKHIH) and 189 to 211 (FVCEVCHKSYTQFSNLCRHKRMH). A C2H2-type 7; atypical zinc finger spans residues 218 to 240 (IKCKDCGQMFSTTSSLNKHRRFC). Disordered stretches follow at residues 371 to 421 (ITEN…SDKD) and 529 to 612 (PLKV…EKKD). Residues 379-390 (RPHEKVSDHSES) are compositionally biased toward basic and acidic residues. The segment covering 397-411 (STPSGSDLETTSGSD) has biased composition (polar residues). Residues 420-433 (KDKLKENGKLYKDK) carry the Nuclear localization signal motif. Basic and acidic residues predominate over residues 529–542 (PLKVEPESPKESKK). The short motif at 551–555 (AFDLT) is the CTBP-binding motif 1 element. Over residues 564–576 (SPNAPSKSSAPTS) the composition is skewed to low complexity. A CTBP-binding motif 2 motif is present at residues 582–586 (PLDLS). Positions 588 to 598 (GSRSRATTTKQ) are enriched in polar residues. Positions 599-612 (TESRKNHIFGEKKD) are enriched in basic and acidic residues. 3 C2H2-type zinc fingers span residues 731–753 (YTCRYCGKIFPRSANLTRHLRTH), 759–782 (YRCKYCDRSFSISSNLQRHIRNIH), and 788–810 (FKCHLCDRCFGQQTNLDRHLKKH). The interval 928 to 951 (KSEVNCKVSPSRHDDDDDDEEEDF) is disordered.

In terms of assembly, homooligomer. Interacts with ctbp.

Its subcellular location is the nucleus. It is found in the nucleus speckle. In terms of biological role, transcriptional repressor during pronephros development. Plays a role in regionalization of the pronephros; may promote formation of the distal tubule and duct over formation of the glomus and proximal tubule. This is MDS1 and EVI1 complex locus protein EVI1-B (mecom-b) from Xenopus laevis (African clawed frog).